The following is a 254-amino-acid chain: Ribosomal protein L11 methyltransferase (254 aa).

5 residues coordinate S-adenosyl-L-methionine: T107, G128, D149, S175, and N191.

This sequence belongs to the methyltransferase superfamily. PrmA family.

The protein resides in the cytoplasm. It catalyses the reaction L-lysyl-[protein] + 3 S-adenosyl-L-methionine = N(6),N(6),N(6)-trimethyl-L-lysyl-[protein] + 3 S-adenosyl-L-homocysteine + 3 H(+). It carries out the reaction an N-terminal L-alpha-aminoacyl-[protein] + 3 S-adenosyl-L-methionine = an N-terminal trimethyl-L-alpha-aminoacyl-[protein] + 3 S-adenosyl-L-homocysteine + 3 H(+). Its function is as follows. Methylates ribosomal protein L11. Preferentially recognizes free L11 before its incorporation into 50S subunits. This function is dispensable for growth and thermostability. In Thermus thermophilus (strain ATCC 27634 / DSM 579 / HB8), this protein is Ribosomal protein L11 methyltransferase.